A 686-amino-acid polypeptide reads, in one-letter code: Phosphomethylpyrimidine synthase (686 aa).

Residues N235, M264, Y293, H329, 349 to 351 (SRG), 390 to 393 (DGMR), and E429 contribute to the substrate site. H433 contributes to the Zn(2+) binding site. Y456 contributes to the substrate binding site. H497 is a binding site for Zn(2+). [4Fe-4S] cluster-binding residues include C577, C580, and C585. Positions 659–686 (IDSSGINDNKNDQQDASVVRVPSLEIEG) are disordered.

It belongs to the ThiC family. In terms of assembly, homodimer. The cofactor is [4Fe-4S] cluster.

The catalysed reaction is 5-amino-1-(5-phospho-beta-D-ribosyl)imidazole + S-adenosyl-L-methionine = 4-amino-2-methyl-5-(phosphooxymethyl)pyrimidine + CO + 5'-deoxyadenosine + formate + L-methionine + 3 H(+). It functions in the pathway cofactor biosynthesis; thiamine diphosphate biosynthesis. Catalyzes the synthesis of the hydroxymethylpyrimidine phosphate (HMP-P) moiety of thiamine from aminoimidazole ribotide (AIR) in a radical S-adenosyl-L-methionine (SAM)-dependent reaction. This Shewanella denitrificans (strain OS217 / ATCC BAA-1090 / DSM 15013) protein is Phosphomethylpyrimidine synthase.